We begin with the raw amino-acid sequence, 225 residues long: MGSEEDKKLTKKQLKAQQFRKSKEEKDQEKDVKKEQAPEGKRPNSAAGNDGEEPVKKKRKTRRGRGGKGKNGKKGNRFIVFVGSLPRDITAVELQNHFKNSSPDQIRLRADKGIAFLEFDADKDRTGIQRRMDIALLQHGTLLKEKKINVELTVGGGGNSQERLEKLKNKNIKLDEERKERLTKMINDGNQKKIAKTTATAAQTSGTDNKPVPAGIHPDRAKLLK.

The segment at 1-75 (MGSEEDKKLT…GGKGKNGKKG (75 aa)) is disordered. A compositionally biased stretch (basic residues) spans 9–20 (LTKKQLKAQQFR). Residues 21 to 42 (KSKEEKDQEKDVKKEQAPEGKR) show a composition bias toward basic and acidic residues. The residue at position 45 (Ser-45) is a Phosphoserine. Basic residues predominate over residues 56 to 75 (KKKRKTRRGRGGKGKNGKKG). In terms of domain architecture, RRM spans 78-155 (FIVFVGSLPR…KKINVELTVG (78 aa)). At Ser-160 the chain carries Phosphoserine. Residues 187-225 (NDGNQKKIAKTTATAAQTSGTDNKPVPAGIHPDRAKLLK) are disordered.

It belongs to the RRM NOP6 family.

The protein localises to the nucleus. It localises to the nucleolus. Its function is as follows. Predicted to be involved in rRNA processing. The protein is Nucleolar protein 6 (NOP6) of Saccharomyces cerevisiae (strain ATCC 204508 / S288c) (Baker's yeast).